Reading from the N-terminus, the 666-residue chain is Envelope glycoprotein (666 aa).

Residues 1–33 (MDRPALPKSIKDKTNPWGPIILGILIMLGGALG) form the signal peptide. A receptor-binding domain (RBD) region spans residues 31–264 (ALGKGSPHKV…KISDLGPRVP (234 aa)). The Extracellular portion of the chain corresponds to 34–607 (KGSPHKVFNL…FNRSPWLTTL (574 aa)). N-linked (GlcNAc...) asparagine; by host glycosylation is present at asparagine 42. 5 cysteine pairs are disulfide-bonded: cysteine 76–cysteine 127, cysteine 102–cysteine 116, cysteine 103–cysteine 112, cysteine 150–cysteine 170, and cysteine 162–cysteine 175. Zn(2+) is bound at residue aspartate 115. The N-linked (GlcNAc...) asparagine; by host glycan is linked to asparagine 197. An intrachain disulfide couples cysteine 207 to cysteine 213. Positions 265–310 (IGPNPVLSEQRPPSQPEPARLPPSSNLTQGGTPSAPTGPPQEGTGD) are disordered. Polar residues predominate over residues 287 to 299 (PSSNLTQGGTPSA). N-linked (GlcNAc...) asparagine; by host glycans are attached at residues asparagine 290 and asparagine 324. 5 disulfides stabilise this stretch: cysteine 334-cysteine 337, cysteine 334-cysteine 560, cysteine 364-cysteine 417, cysteine 424-cysteine 437, and cysteine 552-cysteine 560. The CXXC signature appears at 334-337 (CWLC). N-linked (GlcNAc...) asparagine; by host glycosylation is found at asparagine 356 and asparagine 363. Positions 378–399 (TGKPLPRKGSQDPPGPVQYHSG) are disordered. Asparagine 431 carries N-linked (GlcNAc...) asparagine; by host glycosylation. The fusion peptide stretch occupies residues 469 to 489 (VSLTLALLLGGLTMGGIAAGV). The stretch at 500 to 534 (QQFEQLHAAIQADLKEVESSITNLEKSLTSLSEVV) forms a coiled coil. The tract at residues 535 to 551 (LQNRRGLDLLFLEKGGL) is immunosuppression. Positions 552-560 (CAALKEECC) match the CX6CC motif. The chain crosses the membrane as a helical span at residues 608–628 (ISTIMGPLIILLLILMFGPCI). Cysteine 627 carries S-palmitoyl cysteine; by host lipidation. Topologically, residues 629 to 666 (LNRLVQFVKDRISVVQALVLTQQYHQLKPLEHGRAIVK) are cytoplasmic. A YXXL motif; contains endocytosis signal motif is present at residues 652-655 (YHQL).

The mature envelope protein (Env) consists of a trimer of SU-TM heterodimers attached by a labile interchain disulfide bond. Specific enzymatic cleavages in vivo yield mature proteins. Envelope glycoproteins are synthesized as an inactive precursor that is N-glycosylated and processed likely by host cell furin or by a furin-like protease in the Golgi to yield the mature SU and TM proteins. The cleavage site between SU and TM requires the minimal sequence [KR]-X-[KR]-R. The R-peptide is released from the C-terminus of the cytoplasmic tail of the TM protein upon particle formation as a result of proteolytic cleavage by the viral protease. Cleavage of this peptide is required for TM to become fusogenic. In terms of processing, the CXXC motif is highly conserved across a broad range of retroviral envelope proteins. It is thought to participate in the formation of a labile disulfide bond possibly with the CX6CC motif present in the transmembrane protein. Isomerization of the intersubunit disulfide bond to an SU intrachain disulfide bond is thought to occur upon receptor recognition in order to allow membrane fusion. Post-translationally, the transmembrane protein is palmitoylated. The R-peptide is palmitoylated.

The protein resides in the virion membrane. It is found in the host cell membrane. Its function is as follows. The surface protein (SU) attaches the virus to the host cell by binding to its receptor. This interaction triggers the refolding of the transmembrane protein (TM) and is thought to activate its fusogenic potential by unmasking its fusion peptide. Fusion occurs at the host cell plasma membrane. Functionally, the transmembrane protein (TM) acts as a class I viral fusion protein. Under the current model, the protein has at least 3 conformational states: pre-fusion native state, pre-hairpin intermediate state, and post-fusion hairpin state. During viral and target cell membrane fusion, the coiled coil regions (heptad repeats) assume a trimer-of-hairpins structure, positioning the fusion peptide in close proximity to the C-terminal region of the ectodomain. The formation of this structure appears to drive apposition and subsequent fusion of viral and target cell membranes. Membranes fusion leads to delivery of the nucleocapsid into the cytoplasm. This chain is Envelope glycoprotein (env), found in Hortulanus murine leukemia virus (HoMuLV).